We begin with the raw amino-acid sequence, 449 residues long: UDP-N-acetylmuramoylalanine--D-glutamate ligase (449 aa).

117–123 (GSNGKTT) provides a ligand contact to ATP.

This sequence belongs to the MurCDEF family.

The protein localises to the cytoplasm. It catalyses the reaction UDP-N-acetyl-alpha-D-muramoyl-L-alanine + D-glutamate + ATP = UDP-N-acetyl-alpha-D-muramoyl-L-alanyl-D-glutamate + ADP + phosphate + H(+). Its pathway is cell wall biogenesis; peptidoglycan biosynthesis. Functionally, cell wall formation. Catalyzes the addition of glutamate to the nucleotide precursor UDP-N-acetylmuramoyl-L-alanine (UMA). In Exiguobacterium sibiricum (strain DSM 17290 / CCUG 55495 / CIP 109462 / JCM 13490 / 255-15), this protein is UDP-N-acetylmuramoylalanine--D-glutamate ligase.